A 1176-amino-acid chain; its full sequence is MDNNPNINECIPYNCLSNPEVEVLGGERIETGYTPIDISLSLTQFLLSEFVPGAGFVLGLVDIIWGIFGPSQWDAFLVQIEQLINQRIEEFARNQAISRLEGLSNLYQIYAESFREWEADPTNPALREEMRIQFNDMNSALTTAIPLLAVQNYQVPLLSVYVQAANLHLSVLRDVSVFGQRWGFDAATINSRYNDLTRLIGNYTDYAVRWYNTGLERVWGPDSRDWVRYNQFRRELTLTVLDIVALFSNYDSRRYPIRTVSQLTREIYTNPVLENFDGSFRGMAQRIEPEYRQPHLMDILNSISIYTDVHRGFNYWSGHQITTSPVGFSGPEFTFPLYGTYGNAAPPQRIAQTGLGIFRTLSSPLYRRIILGSGPNNQELFVLDGTEFSFASLTTNLPSTIYRQRGTVDSLDVIPPQDNSVPPRAGFSHRLSHVPMLSQAAGAVYTLRASLFLLLVLLIHARSIFNNIIPSSQITQSFKKIISWTSVVKGPGFTGGDILRRPSPGLISTLRVNITAPLSQRYRVRIRYAFTTNLQFLTSIDGRPINQGNFYATMSSGSNLQSGSFRTVGFTTPFNFSNGSSVFTLSAHVFNSGNEVYIDRIEFVPAEVTFEAEYDLERAQNGVNQLFTSSNQIGLKTDGTDYHIDQVSNLVECLSDEFCLDEKQELSEKVKHAKRLSDERNLLQDPNFRGINRQLDRGWRGSHDITIQGGDDVFKENYVTLLGTFDECYPTYLYQKIDQSKLKAYTSYQLRGYIEDSQDLEIYLIGYNAKQQTVNVPGTGSLWPVYAPKPIGKCGEPNRCAPHLEWNPDLDCSCRDGEKCAHHSLHFSIDIDVGCTDLNEDLGVWVIFKIKTEDGHARLGNLEFLEEKPLVGEALARVKRAEKKWRDKRVKLEWETNIVYKEAKESVDALFVNSQYDQLQADTNIAMIHAADKRVHSIREAYLPELSVIPGVNAAIFEELEGRIFTAFSLYDARNVIKNGDFNNGLSCWNVKGHVDVEEQNNQRSVLVVPEWEAEVSQEVRVCPGRGYFPRVTAYKEGYGEGCVTIHEIENNTDELKFSNCVEEEIYPNNTVTCNDYTVNQEEYGGAYTSRNRGYNEAPSVPADYASVYEEKSYTDGRRENPCEFNRGYRDYTGLPVGYVTKALEYFPETDKVWIEIGETEGTFIVDSVELLLMEE.

This sequence belongs to the delta endotoxin family.

Promotes colloidosmotic lysis by binding to the midgut epithelial cells of many lepidopteran larvae. This chain is Pesticidal crystal protein Cry1Ag (cry1Ag), found in Bacillus thuringiensis.